Here is a 1157-residue protein sequence, read N- to C-terminus: uncharacterized protein (1157 aa).

Residues 1–10 (MDPHWKRHDS) are compositionally biased toward basic and acidic residues. Disordered regions lie at residues 1–35 (MDPH…QRFG), 159–233 (QTTP…SVEP), and 478–498 (KNQS…GKGP). 2 stretches are compositionally biased toward low complexity: residues 18–31 (SPSA…PSSA) and 181–197 (SAGT…NPNF). Residues 208 to 228 (QEWQQSPLESPLSMHSLQESL) are compositionally biased toward polar residues. Positions 501–574 (VWFKPSDKRI…KVEYKAILHD (74 aa)) constitute a CSD2 domain. In terms of domain architecture, RNB spans 608 to 921 (LRDKLTFMIG…ICVQRQLREA (314 aa)). One can recognise a DIS3L2 C-terminal domain in the interval 973 to 1030 (GLVKHKAFVLAVDQEYIDIVIYEFGLERRISLDLLPLSNCDFNEQKHELYLSWRTNAS). The interval 1084 to 1113 (YSKARGNDSTSKTAKSSSGNQDISGDGKLH) is disordered. A compositionally biased stretch (polar residues) spans 1090 to 1106 (NDSTSKTAKSSSGNQDI).

Belongs to the RNR ribonuclease family.

It localises to the cytoplasm. This is an uncharacterized protein from Schizosaccharomyces pombe (strain 972 / ATCC 24843) (Fission yeast).